We begin with the raw amino-acid sequence, 540 residues long: Fumonisin B1 esterase (540 aa).

Catalysis depends on Ser-240, which acts as the Acyl-ester intermediate. Catalysis depends on charge relay system residues Glu-356 and His-448. The disordered stretch occupies residues 521-540 (QVGSGEGLGVSPSKACQPSK).

It belongs to the type-B carboxylesterase/lipase family.

The enzyme catalyses fumonisin B1 + 2 H2O = 2 tricarballylate + (2S,3S,5R,10R,12S,14S,15R,16R)-2-amino-12,16-dimethylicosane-3,5,10,14,15-pentol + 2 H(+). Involved in degradation of fumonisin B1. Catalyzes the hydrolysis of fumonisin B1 (FB1) to aminopentol (HFB1). This Sphingopyxis macrogoltabida (Sphingomonas macrogoltabidus) protein is Fumonisin B1 esterase (fumD).